A 275-amino-acid chain; its full sequence is 4-diphosphocytidyl-2-C-methyl-D-erythritol kinase (275 aa).

The active site involves K14. Residue 98–108 coordinates ATP; the sequence is PMGAGLGGGSS. Residue D140 is part of the active site.

This sequence belongs to the GHMP kinase family. IspE subfamily.

The enzyme catalyses 4-CDP-2-C-methyl-D-erythritol + ATP = 4-CDP-2-C-methyl-D-erythritol 2-phosphate + ADP + H(+). Its pathway is isoprenoid biosynthesis; isopentenyl diphosphate biosynthesis via DXP pathway; isopentenyl diphosphate from 1-deoxy-D-xylulose 5-phosphate: step 3/6. Catalyzes the phosphorylation of the position 2 hydroxy group of 4-diphosphocytidyl-2C-methyl-D-erythritol. The sequence is that of 4-diphosphocytidyl-2-C-methyl-D-erythritol kinase from Francisella tularensis subsp. holarctica (strain FTNF002-00 / FTA).